A 21-amino-acid polypeptide reads, in one-letter code: Peptide PGLa-R3 (21 aa).

Residue L21 is modified to Leucine amide.

As to expression, expressed by the skin glands.

Its subcellular location is the secreted. In terms of biological role, antimicrobial peptide. The chain is Peptide PGLa-R3 from Xenopus ruwenzoriensis (Uganda clawed frog).